A 253-amino-acid polypeptide reads, in one-letter code: Isoprenyl transferase (253 aa).

Asp-30 is a catalytic residue. Asp-30 contributes to the Mg(2+) binding site. Substrate is bound by residues 31 to 34, Trp-35, His-51, and 79 to 81; these read GNRR and STE. The active-site Proton acceptor is Asn-82. Substrate contacts are provided by residues Phe-83, Arg-85, Arg-202, and 208–210; that span reads RVS. Mg(2+) is bound at residue Glu-221.

Belongs to the UPP synthase family. In terms of assembly, homodimer. The cofactor is Mg(2+).

Functionally, catalyzes the condensation of isopentenyl diphosphate (IPP) with allylic pyrophosphates generating different type of terpenoids. This chain is Isoprenyl transferase, found in Chlamydia muridarum (strain MoPn / Nigg).